The sequence spans 371 residues: UDP-N-acetylglucosamine--N-acetylmuramyl-(pentapeptide) pyrophosphoryl-undecaprenol N-acetylglucosamine transferase (371 aa).

Residues 10-12, asparagine 124, arginine 165, serine 191, isoleucine 246, and glutamine 291 contribute to the UDP-N-acetyl-alpha-D-glucosamine site; that span reads TGG.

The protein belongs to the glycosyltransferase 28 family. MurG subfamily.

It is found in the cell inner membrane. It catalyses the reaction di-trans,octa-cis-undecaprenyl diphospho-N-acetyl-alpha-D-muramoyl-L-alanyl-D-glutamyl-meso-2,6-diaminopimeloyl-D-alanyl-D-alanine + UDP-N-acetyl-alpha-D-glucosamine = di-trans,octa-cis-undecaprenyl diphospho-[N-acetyl-alpha-D-glucosaminyl-(1-&gt;4)]-N-acetyl-alpha-D-muramoyl-L-alanyl-D-glutamyl-meso-2,6-diaminopimeloyl-D-alanyl-D-alanine + UDP + H(+). It participates in cell wall biogenesis; peptidoglycan biosynthesis. Functionally, cell wall formation. Catalyzes the transfer of a GlcNAc subunit on undecaprenyl-pyrophosphoryl-MurNAc-pentapeptide (lipid intermediate I) to form undecaprenyl-pyrophosphoryl-MurNAc-(pentapeptide)GlcNAc (lipid intermediate II). The chain is UDP-N-acetylglucosamine--N-acetylmuramyl-(pentapeptide) pyrophosphoryl-undecaprenol N-acetylglucosamine transferase from Geobacter sp. (strain M21).